The sequence spans 1017 residues: Probable isoleucine--tRNA ligase, cytoplasmic (1017 aa).

The 'HIGH' region signature appears at 45–55; sequence PFATGLPHYGH. The 'KMSKS' region signature appears at 609 to 613; the sequence is KMSKR. Residue lysine 612 coordinates ATP.

Belongs to the class-I aminoacyl-tRNA synthetase family.

It localises to the cytoplasm. It catalyses the reaction tRNA(Ile) + L-isoleucine + ATP = L-isoleucyl-tRNA(Ile) + AMP + diphosphate. The polypeptide is Probable isoleucine--tRNA ligase, cytoplasmic (Encephalitozoon cuniculi (strain GB-M1) (Microsporidian parasite)).